Consider the following 154-residue polypeptide: Interleukin-2 (154 aa).

Positions 1–20 (MYRMQLLSCIALSLALVTNS) are cleaved as a signal peptide. An O-linked (GalNAc...) threonine glycan is attached at threonine 23. A disulfide bond links cysteine 78 and cysteine 126.

This sequence belongs to the IL-2 family.

It localises to the secreted. Cytokine produced by activated CD4-positive helper T-cells and to a lesser extend activated CD8-positive T-cells and natural killer (NK) cells that plays pivotal roles in the immune response and tolerance. Binds to a receptor complex composed of either the high-affinity trimeric IL-2R (IL2RA/CD25, IL2RB/CD122 and IL2RG/CD132) or the low-affinity dimeric IL-2R (IL2RB and IL2RG). Interaction with the receptor leads to oligomerization and conformation changes in the IL-2R subunits resulting in downstream signaling starting with phosphorylation of JAK1 and JAK3. In turn, JAK1 and JAK3 phosphorylate the receptor to form a docking site leading to the phosphorylation of several substrates including STAT5. This process leads to activation of several pathways including STAT, phosphoinositide-3-kinase/PI3K and mitogen-activated protein kinase/MAPK pathways. Functions as a T-cell growth factor and can increase NK-cell cytolytic activity as well. Promotes strong proliferation of activated B-cells and subsequently immunoglobulin production. Plays a pivotal role in regulating the adaptive immune system by controlling the survival and proliferation of regulatory T-cells, which are required for the maintenance of immune tolerance. Moreover, participates in the differentiation and homeostasis of effector T-cell subsets, including Th1, Th2, Th17 as well as memory CD8-positive T-cells. This Papio anubis (Olive baboon) protein is Interleukin-2 (IL2).